Here is a 364-residue protein sequence, read N- to C-terminus: Phosphoserine aminotransferase (364 aa).

Position 42 (Arg-42) interacts with L-glutamate. Residues 76–77 (AS), Trp-100, Thr-150, Asp-169, and Gln-192 contribute to the pyridoxal 5'-phosphate site. An N6-(pyridoxal phosphate)lysine modification is found at Lys-193. 234 to 235 (NT) is a pyridoxal 5'-phosphate binding site.

The protein belongs to the class-V pyridoxal-phosphate-dependent aminotransferase family. SerC subfamily. As to quaternary structure, homodimer. The cofactor is pyridoxal 5'-phosphate.

The protein localises to the cytoplasm. It catalyses the reaction O-phospho-L-serine + 2-oxoglutarate = 3-phosphooxypyruvate + L-glutamate. It carries out the reaction 4-(phosphooxy)-L-threonine + 2-oxoglutarate = (R)-3-hydroxy-2-oxo-4-phosphooxybutanoate + L-glutamate. Its pathway is amino-acid biosynthesis; L-serine biosynthesis; L-serine from 3-phospho-D-glycerate: step 2/3. Its function is as follows. Catalyzes the reversible conversion of 3-phosphohydroxypyruvate to phosphoserine and of 3-hydroxy-2-oxo-4-phosphonooxybutanoate to phosphohydroxythreonine. This is Phosphoserine aminotransferase from Shouchella clausii (strain KSM-K16) (Alkalihalobacillus clausii).